A 423-amino-acid polypeptide reads, in one-letter code: MFEKAKEFMPGGVNSPVRAFKSVELDPIFVKSAKGSKIKDINNNEYIDYIQSWGALILGHSHEVVINAINEQSQKGTSYGLCHPLEVEMAQILVENIPSIEMVRMVNSGTEAVMSAIRLARAYTKRDFIVKFEGCYHGHSDSLLVKAGSGALTFGTPNSEGVTKEFVSKTIVAKYNDVQNINEIFENFGDKIACVIVEPIAGNMGVVPPKPNFLLTLRKLTKKYNSILIFDEVITGFRVSQNGAQGLFNVIPDLTTLGKVIGGGLPVGAFGGKKEIMQLISPQGPVYQAGTLSGNPLTLAAGVSTLKFILNNKNFYKKLDELAKTLEEGLLYALKDFNIKVNRVGSMISFFFNGSSVDTYEKVISSDVNMYKKLFKYFLSYGILLPPSPFESLFISYAHTNEDIQQTIDIAMKFSKNLKEGKV.

Position 259 is an N6-(pyridoxal phosphate)lysine (K259).

This sequence belongs to the class-III pyridoxal-phosphate-dependent aminotransferase family. HemL subfamily. Homodimer. Pyridoxal 5'-phosphate serves as cofactor.

The protein resides in the cytoplasm. The enzyme catalyses (S)-4-amino-5-oxopentanoate = 5-aminolevulinate. The protein operates within porphyrin-containing compound metabolism; protoporphyrin-IX biosynthesis; 5-aminolevulinate from L-glutamyl-tRNA(Glu): step 2/2. This is Glutamate-1-semialdehyde 2,1-aminomutase from Thermosipho melanesiensis (strain DSM 12029 / CIP 104789 / BI429).